Reading from the N-terminus, the 561-residue chain is DNA ligase B (561 aa).

The N6-AMP-lysine intermediate role is filled by Lys125.

This sequence belongs to the NAD-dependent DNA ligase family. LigB subfamily.

The enzyme catalyses NAD(+) + (deoxyribonucleotide)n-3'-hydroxyl + 5'-phospho-(deoxyribonucleotide)m = (deoxyribonucleotide)n+m + AMP + beta-nicotinamide D-nucleotide.. Its function is as follows. Catalyzes the formation of phosphodiester linkages between 5'-phosphoryl and 3'-hydroxyl groups in double-stranded DNA using NAD as a coenzyme and as the energy source for the reaction. This chain is DNA ligase B, found in Salmonella gallinarum (strain 287/91 / NCTC 13346).